A 283-amino-acid polypeptide reads, in one-letter code: NAD kinase (283 aa).

The Proton acceptor role is filled by aspartate 69. Residues 69 to 70, 138 to 139, lysine 166, aspartate 168, leucine 176, 179 to 184, and glutamine 235 each bind NAD(+); these read DG, NE, and TAYNLS.

It belongs to the NAD kinase family. The cofactor is a divalent metal cation.

The protein resides in the cytoplasm. It catalyses the reaction NAD(+) + ATP = ADP + NADP(+) + H(+). Functionally, involved in the regulation of the intracellular balance of NAD and NADP, and is a key enzyme in the biosynthesis of NADP. Catalyzes specifically the phosphorylation on 2'-hydroxyl of the adenosine moiety of NAD to yield NADP. The protein is NAD kinase of Helicobacter acinonychis (strain Sheeba).